Reading from the N-terminus, the 210-residue chain is Thymidylate kinase (210 aa).

Residue 16–23 (GGDGVGKS) participates in ATP binding.

This sequence belongs to the thymidylate kinase family.

The catalysed reaction is dTMP + ATP = dTDP + ADP. In terms of biological role, phosphorylation of dTMP to form dTDP in both de novo and salvage pathways of dTTP synthesis. This Leifsonia xyli subsp. xyli (strain CTCB07) protein is Thymidylate kinase.